A 485-amino-acid polypeptide reads, in one-letter code: Glutamate--tRNA ligase (485 aa).

Residues 11–21 carry the 'HIGH' region motif; it reads PSPTGLLHIGN. The 'KMSKS' region motif lies at 255–259; sequence KLSKR. K258 lines the ATP pocket.

This sequence belongs to the class-I aminoacyl-tRNA synthetase family. Glutamate--tRNA ligase type 1 subfamily. Monomer.

The protein resides in the cytoplasm. It carries out the reaction tRNA(Glu) + L-glutamate + ATP = L-glutamyl-tRNA(Glu) + AMP + diphosphate. Catalyzes the attachment of glutamate to tRNA(Glu) in a two-step reaction: glutamate is first activated by ATP to form Glu-AMP and then transferred to the acceptor end of tRNA(Glu). In Streptococcus mutans serotype c (strain ATCC 700610 / UA159), this protein is Glutamate--tRNA ligase.